A 293-amino-acid polypeptide reads, in one-letter code: 4-hydroxy-tetrahydrodipicolinate synthase (293 aa).

T45 contributes to the pyruvate binding site. Y133 functions as the Proton donor/acceptor in the catalytic mechanism. Catalysis depends on K161, which acts as the Schiff-base intermediate with substrate. A pyruvate-binding site is contributed by I203.

It belongs to the DapA family. In terms of assembly, homotetramer; dimer of dimers.

The protein resides in the cytoplasm. The catalysed reaction is L-aspartate 4-semialdehyde + pyruvate = (2S,4S)-4-hydroxy-2,3,4,5-tetrahydrodipicolinate + H2O + H(+). The protein operates within amino-acid biosynthesis; L-lysine biosynthesis via DAP pathway; (S)-tetrahydrodipicolinate from L-aspartate: step 3/4. Its function is as follows. Catalyzes the condensation of (S)-aspartate-beta-semialdehyde [(S)-ASA] and pyruvate to 4-hydroxy-tetrahydrodipicolinate (HTPA). This is 4-hydroxy-tetrahydrodipicolinate synthase from Pseudoalteromonas atlantica (strain T6c / ATCC BAA-1087).